A 227-amino-acid chain; its full sequence is uncharacterized protein (227 aa).

The next 2 membrane-spanning stretches (helical) occupy residues 113–133 (IMLILMILSMILIIPLFFIVF) and 141–161 (FGICLTLLFYIAIFILTNGLI).

The protein localises to the membrane. This is an uncharacterized protein from Dictyostelium discoideum (Social amoeba).